The sequence spans 482 residues: UDP-N-acetylmuramate--L-alanine ligase (482 aa).

The interval 1–26 is disordered; that stretch reads MPQLPMTDSAPLPTPAPSSPAQPSAQ. 140–146 is an ATP binding site; that stretch reads GTHGKTT.

This sequence belongs to the MurCDEF family.

The protein localises to the cytoplasm. It catalyses the reaction UDP-N-acetyl-alpha-D-muramate + L-alanine + ATP = UDP-N-acetyl-alpha-D-muramoyl-L-alanine + ADP + phosphate + H(+). It functions in the pathway cell wall biogenesis; peptidoglycan biosynthesis. Functionally, cell wall formation. This is UDP-N-acetylmuramate--L-alanine ligase from Deinococcus radiodurans (strain ATCC 13939 / DSM 20539 / JCM 16871 / CCUG 27074 / LMG 4051 / NBRC 15346 / NCIMB 9279 / VKM B-1422 / R1).